The sequence spans 338 residues: Protein SGT1 homolog (338 aa).

At A2 the chain carries N-acetylalanine. TPR repeat units lie at residues 11-45 (AASR…KPDD), 46-79 (APYY…NPNS), and 80-113 (STAL…NSAD). The CS domain occupies 142 to 231 (QSKIKYDWYQ…PEAVRWEKLE (90 aa)). Residues 249–338 (LYPSSSHYTR…PPDDMEWKKY (90 aa)) enclose the SGS domain. Position 254 is a phosphoserine (S254). T257 is modified (phosphothreonine). A Glycyl lysine isopeptide (Lys-Gly) (interchain with G-Cter in SUMO1); alternate cross-link involves residue K268. K268 is covalently cross-linked (Glycyl lysine isopeptide (Lys-Gly) (interchain with G-Cter in SUMO2); alternate). S304 carries the phosphoserine modification.

It belongs to the SGT1 family. Probably associates with SCF (SKP1-CUL1-F-box protein) complex through interaction with SKP1. Interacts with S100A6. Interacts with HSP90. Post-translationally, phosphorylated at Ser-254 and Ser-304, dephosphorylation promotes nuclear translocation, most likely due to disruption of the SUGT1-HSP90 complex.

Its subcellular location is the cytoplasm. The protein resides in the nucleus. In terms of biological role, may play a role in ubiquitination and subsequent proteasomal degradation of target proteins. This Bos taurus (Bovine) protein is Protein SGT1 homolog.